A 145-amino-acid polypeptide reads, in one-letter code: Ribosome-binding factor A (145 aa).

Positions 122–132 are enriched in basic and acidic residues; it reads KVQRDLESAPR. Residues 122 to 145 are disordered; sequence KVQRDLESAPREDDEGEPASSSRD.

Belongs to the RbfA family. As to quaternary structure, monomer. Binds 30S ribosomal subunits, but not 50S ribosomal subunits or 70S ribosomes.

Its subcellular location is the cytoplasm. In terms of biological role, one of several proteins that assist in the late maturation steps of the functional core of the 30S ribosomal subunit. Associates with free 30S ribosomal subunits (but not with 30S subunits that are part of 70S ribosomes or polysomes). Required for efficient processing of 16S rRNA. May interact with the 5'-terminal helix region of 16S rRNA. The sequence is that of Ribosome-binding factor A from Methylorubrum extorquens (strain CM4 / NCIMB 13688) (Methylobacterium extorquens).